The sequence spans 117 residues: Replication initiation control protein YabA (117 aa).

A disordered region spans residues 45–81 (NQHLRERLDQSDRDKSSETENDSAQKPGHSDIGEGHD). Basic and acidic residues-rich tracts occupy residues 46 to 62 (QHLR…KSSE) and 72 to 81 (GHSDIGEGHD). Zn(2+) contacts are provided by His92, Cys94, Cys107, and Cys110.

This sequence belongs to the YabA family. In terms of assembly, homotetramer. Interacts with both DnaA and DnaN, acting as a bridge between these two proteins. It depends on Zn(2+) as a cofactor.

The protein resides in the cytoplasm. It is found in the nucleoid. Involved in control of chromosome replication initiation. Inhibits the cooperative binding of DnaA to the oriC region, thus negatively regulating initiation of chromosome replication. Inhibits the ability of DnaA-ATP to form a helix on DNA; does not disassemble preformed DnaA-DNA helices. Decreases the residence time of DnaA on the chromosome at its binding sites (oriC, replication forks and promoter-binding sites). Tethers DnaA to the replication machinery via the DNA polymerase beta sliding clamp subunit (dnaN). Associates with oriC and other DnaA targets on the chromosome in a DnaA-dependent manner. The protein is Replication initiation control protein YabA of Bacillus pumilus (strain SAFR-032).